The primary structure comprises 69 residues: Protein translocase subunit SecE (69 aa).

A helical transmembrane segment spans residues Val43–Thr63.

It belongs to the SecE/SEC61-gamma family. As to quaternary structure, component of the Sec protein translocase complex. Heterotrimer consisting of SecY (alpha), SecG (beta) and SecE (gamma) subunits. The heterotrimers can form oligomers, although 1 heterotrimer is thought to be able to translocate proteins. Interacts with the ribosome. May interact with SecDF, and other proteins may be involved.

The protein resides in the cell membrane. Essential subunit of the Sec protein translocation channel SecYEG. Clamps together the 2 halves of SecY. May contact the channel plug during translocation. In Methanococcoides burtonii (strain DSM 6242 / NBRC 107633 / OCM 468 / ACE-M), this protein is Protein translocase subunit SecE.